The chain runs to 135 residues: Small ribosomal subunit protein uS12 (135 aa).

A 3-methylthioaspartic acid modification is found at aspartate 89. Residues 101–135 form a disordered region; sequence SLDTSGVADRKQSRSKYGAKQPKAGAAAPVKGKRR. Residues 116–135 show a composition bias toward low complexity; the sequence is KYGAKQPKAGAAAPVKGKRR.

It belongs to the universal ribosomal protein uS12 family. As to quaternary structure, part of the 30S ribosomal subunit. Contacts proteins S8 and S17. May interact with IF1 in the 30S initiation complex.

Functionally, with S4 and S5 plays an important role in translational accuracy. Its function is as follows. Interacts with and stabilizes bases of the 16S rRNA that are involved in tRNA selection in the A site and with the mRNA backbone. Located at the interface of the 30S and 50S subunits, it traverses the body of the 30S subunit contacting proteins on the other side and probably holding the rRNA structure together. The combined cluster of proteins S8, S12 and S17 appears to hold together the shoulder and platform of the 30S subunit. This Chlorobium phaeobacteroides (strain DSM 266 / SMG 266 / 2430) protein is Small ribosomal subunit protein uS12.